Reading from the N-terminus, the 80-residue chain is Small ribosomal subunit protein bS21 (80 aa).

Belongs to the bacterial ribosomal protein bS21 family.

The chain is Small ribosomal subunit protein bS21 from Rhodospirillum rubrum (strain ATCC 11170 / ATH 1.1.1 / DSM 467 / LMG 4362 / NCIMB 8255 / S1).